Reading from the N-terminus, the 491-residue chain is Protein nucleotidyltransferase YdiU (491 aa).

Residues glycine 88, glycine 90, arginine 91, lysine 111, aspartate 123, glycine 124, arginine 174, and arginine 181 each coordinate ATP. Catalysis depends on aspartate 250, which acts as the Proton acceptor. Mg(2+) contacts are provided by asparagine 251 and aspartate 260. An ATP-binding site is contributed by aspartate 260. Basic and acidic residues predominate over residues 466–484; the sequence is DDQPDRADYAEPPQPEERV. Residues 466–491 form a disordered region; sequence DDQPDRADYAEPPQPEERVLQTFCGT.

It belongs to the SELO family. Mg(2+) serves as cofactor. Mn(2+) is required as a cofactor.

It carries out the reaction L-seryl-[protein] + ATP = 3-O-(5'-adenylyl)-L-seryl-[protein] + diphosphate. It catalyses the reaction L-threonyl-[protein] + ATP = 3-O-(5'-adenylyl)-L-threonyl-[protein] + diphosphate. The enzyme catalyses L-tyrosyl-[protein] + ATP = O-(5'-adenylyl)-L-tyrosyl-[protein] + diphosphate. The catalysed reaction is L-histidyl-[protein] + UTP = N(tele)-(5'-uridylyl)-L-histidyl-[protein] + diphosphate. It carries out the reaction L-seryl-[protein] + UTP = O-(5'-uridylyl)-L-seryl-[protein] + diphosphate. It catalyses the reaction L-tyrosyl-[protein] + UTP = O-(5'-uridylyl)-L-tyrosyl-[protein] + diphosphate. In terms of biological role, nucleotidyltransferase involved in the post-translational modification of proteins. It can catalyze the addition of adenosine monophosphate (AMP) or uridine monophosphate (UMP) to a protein, resulting in modifications known as AMPylation and UMPylation. This Bradyrhizobium sp. (strain ORS 278) protein is Protein nucleotidyltransferase YdiU.